A 493-amino-acid polypeptide reads, in one-letter code: Cobyric acid synthase (493 aa).

The GATase cobBQ-type domain occupies 261-455 (HTRIAVVAYP…LHGLFEDAAV (195 aa)). Cysteine 342 acts as the Nucleophile in catalysis. Histidine 447 is an active-site residue.

Belongs to the CobB/CobQ family. CobQ subfamily.

It participates in cofactor biosynthesis; adenosylcobalamin biosynthesis. Its function is as follows. Catalyzes amidations at positions B, D, E, and G on adenosylcobyrinic A,C-diamide. NH(2) groups are provided by glutamine, and one molecule of ATP is hydrogenolyzed for each amidation. The protein is Cobyric acid synthase of Acidovorax sp. (strain JS42).